Reading from the N-terminus, the 502-residue chain is ATP synthase subunit alpha (502 aa).

170–177 (GDRKTGKT) is a binding site for ATP.

It belongs to the ATPase alpha/beta chains family. In terms of assembly, F-type ATPases have 2 components, CF(1) - the catalytic core - and CF(0) - the membrane proton channel. CF(1) has five subunits: alpha(3), beta(3), gamma(1), delta(1), epsilon(1). CF(0) has four main subunits: a, b, b' and c.

The protein resides in the cellular thylakoid membrane. It carries out the reaction ATP + H2O + 4 H(+)(in) = ADP + phosphate + 5 H(+)(out). Its function is as follows. Produces ATP from ADP in the presence of a proton gradient across the membrane. The alpha chain is a regulatory subunit. The sequence is that of ATP synthase subunit alpha from Microcystis aeruginosa (strain NIES-843 / IAM M-2473).